A 275-amino-acid polypeptide reads, in one-letter code: Non-heme chloroperoxidase CPO-A1 (275 aa).

One can recognise an AB hydrolase-1 domain in the interval P22 to I255. Catalysis depends on charge relay system residues S95, D224, and H253.

The protein belongs to the AB hydrolase superfamily. Bacterial non-heme haloperoxidase / perhydrolase family. Homodimer.

With respect to regulation, brominating activity not inhibited by azide, peroxidase activity stimulated by bromide. May be a chlorinating enzyme involved in 7-chlorotetracycline biosynthesis. Able to brominate as well. The sequence is that of Non-heme chloroperoxidase CPO-A1 (bpoA1) from Kitasatospora aureofaciens (Streptomyces aureofaciens).